Here is a 561-residue protein sequence, read N- to C-terminus: Arf-GAP domain and FG repeat-containing protein 1 (561 aa).

In terms of domain architecture, Arf-GAP spans 11-135; the sequence is EKHLKMLRDM…WYVPPEQAKV (125 aa). The segment at 29-52 adopts a C4-type zinc-finger fold; it reads CFDCDQRGPTYVNMTVGSFVCTSC. Phosphoserine is present on serine 167. The interval 171-193 is disordered; it reads LHLNKGTPTQSPVVGRSQGQQQE. The span at 176–191 shows a compositional bias: polar residues; the sequence is GTPTQSPVVGRSQGQQ. Threonine 177 bears the Phosphothreonine mark. 2 positions are modified to phosphoserine: serine 181 and serine 362. A glycan (O-linked (GlcNAc) serine) is linked at serine 367. Positions 409–451 are disordered; it reads PVGASPQTQPASSGPAPFGATPSTNPFVAATGPSAASSTNPFQ. The segment covering 442 to 451 has biased composition (polar residues); sequence SAASSTNPFQ.

As to quaternary structure, interacts with EPS15R and EPS15. Interacts with FCHO1. Post-translationally, O-glycosylated.

It localises to the nucleus. It is found in the cytoplasmic vesicle. Required for vesicle docking or fusion during acrosome biogenesis. May play a role in RNA trafficking or localization. The polypeptide is Arf-GAP domain and FG repeat-containing protein 1 (Agfg1) (Rattus norvegicus (Rat)).